The chain runs to 165 residues: 3-isopropylmalate dehydratase small subunit (165 aa).

This sequence belongs to the LeuD family. LeuD type 2 subfamily. Heterodimer of LeuC and LeuD.

The enzyme catalyses (2R,3S)-3-isopropylmalate = (2S)-2-isopropylmalate. It participates in amino-acid biosynthesis; L-leucine biosynthesis; L-leucine from 3-methyl-2-oxobutanoate: step 2/4. Its function is as follows. Catalyzes the isomerization between 2-isopropylmalate and 3-isopropylmalate, via the formation of 2-isopropylmaleate. The polypeptide is 3-isopropylmalate dehydratase small subunit (Halothermothrix orenii (strain H 168 / OCM 544 / DSM 9562)).